Consider the following 251-residue polypeptide: Coproheme decarboxylase (251 aa).

Residues R133, Y147–K151, H174, Q187, and S225 each bind Fe-coproporphyrin III. The active site involves Y147.

Belongs to the ChdC family. Type 1 subfamily. As to quaternary structure, homopentamer. Homohexamer in solution. Fe-coproporphyrin III is required as a cofactor.

It carries out the reaction Fe-coproporphyrin III + 2 H2O2 + 2 H(+) = heme b + 2 CO2 + 4 H2O. It catalyses the reaction Fe-coproporphyrin III + H2O2 + H(+) = harderoheme III + CO2 + 2 H2O. The enzyme catalyses harderoheme III + H2O2 + H(+) = heme b + CO2 + 2 H2O. It participates in porphyrin-containing compound metabolism; protoheme biosynthesis. Its function is as follows. Involved in coproporphyrin-dependent heme b biosynthesis. Catalyzes the decarboxylation of Fe-coproporphyrin III (coproheme) to heme b (protoheme IX), the last step of the pathway. The reaction occurs in a stepwise manner with a three-propionate intermediate. This chain is Coproheme decarboxylase, found in Listeria monocytogenes serovar 1/2a (strain ATCC BAA-679 / EGD-e).